The following is a 578-amino-acid chain: Kelch repeat-containing protein kel-10 (578 aa).

Residues 51-118 (PTVTLVLRNN…PKAFEQGIKP (68 aa)) form the BTB domain. The 79-residue stretch at 158 to 236 (IKIFRLALLY…NSPLQSDRMA (79 aa)) folds into the BACK domain. Kelch repeat units follow at residues 265 to 315 (AIVC…VVED), 316 to 362 (KLIV…RIND), 368 to 414 (LIFA…TIDN), 416 to 462 (IVVI…SIMN), 464 to 510 (VCMI…QMDT), and 512 to 558 (SIYV…TLSD).

The chain is Kelch repeat-containing protein kel-10 from Caenorhabditis elegans.